A 132-amino-acid chain; its full sequence is Vesicle transport protein GOT1A (132 aa).

The Cytoplasmic segment spans residues 1–9; that stretch reads MISITEWQK. Residues 10–30 form a helical membrane-spanning segment; sequence IGVGITGFGIFFILFGTLLYF. Position 31 (Asp-31) is a topological domain, lumenal. The chain crosses the membrane as a helical span at residues 32–52; it reads SVLLAFGNLLFLTGLSLIIGL. The Cytoplasmic segment spans residues 53–68; that stretch reads RKTFWFFFQRHKLKGT. Residues 69 to 89 traverse the membrane as a helical segment; that stretch reads SFLLGGVVIVLLRWPLLGMFL. At 90-100 the chain is on the lumenal side; the sequence is ETYGFFSLFKG. The chain crosses the membrane as a helical span at residues 101–121; the sequence is FFPVAFGFLGNVCNIPFLGAL. The Cytoplasmic portion of the chain corresponds to 122–132; the sequence is FRRLQGTSSMV.

The protein belongs to the GOT1 family.

Its subcellular location is the golgi apparatus membrane. Its function is as follows. May be involved in fusion of ER-derived transport vesicles with the Golgi complex. This Homo sapiens (Human) protein is Vesicle transport protein GOT1A.